Reading from the N-terminus, the 139-residue chain is MDTIGHHYIVEAAGCDPKVIGDADKIREIFLEAAKRGNMEVKASYFFKFSPMGVSGVVIVAESHISVHTWPEKGYAALDVYTCGEKADPEKAVDYILEQFKAQYAHVSEIKRGIEEDDETFTHTILTWEEKLDRRNGKL.

Ser-63 functions as the Schiff-base intermediate with substrate; via pyruvic acid in the catalytic mechanism. Pyruvic acid (Ser); by autocatalysis is present on Ser-63. The Proton acceptor; for processing activity role is filled by His-68. The active-site Proton donor; for catalytic activity is the Cys-83.

It belongs to the prokaryotic AdoMetDC family. Type 1 subfamily. Heterotetramer of two alpha and two beta chains arranged as a dimer of alpha/beta heterodimers. Pyruvate is required as a cofactor. Is synthesized initially as an inactive proenzyme. Formation of the active enzyme involves a self-maturation process in which the active site pyruvoyl group is generated from an internal serine residue via an autocatalytic post-translational modification. Two non-identical subunits are generated from the proenzyme in this reaction, and the pyruvate is formed at the N-terminus of the alpha chain, which is derived from the carboxyl end of the proenzyme. The post-translation cleavage follows an unusual pathway, termed non-hydrolytic serinolysis, in which the side chain hydroxyl group of the serine supplies its oxygen atom to form the C-terminus of the beta chain, while the remainder of the serine residue undergoes an oxidative deamination to produce ammonia and the pyruvoyl group blocking the N-terminus of the alpha chain.

It catalyses the reaction S-adenosyl-L-methionine + H(+) = S-adenosyl 3-(methylsulfanyl)propylamine + CO2. Its pathway is amine and polyamine biosynthesis; S-adenosylmethioninamine biosynthesis; S-adenosylmethioninamine from S-adenosyl-L-methionine: step 1/1. Catalyzes the decarboxylation of S-adenosylmethionine to S-adenosylmethioninamine (dcAdoMet), the propylamine donor required for the synthesis of the polyamines spermine and spermidine from the diamine putrescine. This Pyrococcus abyssi (strain GE5 / Orsay) protein is S-adenosylmethionine decarboxylase proenzyme.